Reading from the N-terminus, the 1996-residue chain is Protein Shroom3 (1996 aa).

Residues 25–110 form the PDZ domain; sequence YIYLEAFLEG…TLRLVVRRDV (86 aa). The disordered stretch occupies residues 150 to 173; that stretch reads KHRRSEPAGRPHSWHTTKSGEKQP. A Phosphoserine modification is found at Ser213. Disordered stretches follow at residues 340-389, 437-468, 568-629, 673-772, and 788-1053; these read NGQG…PARS, EKSP…TSIY, DASL…WEGD, RRHS…LQGF, and FEQR…PESS. Residues Ser439 and Ser443 each carry the phosphoserine modification. Basic and acidic residues predominate over residues 700 to 718; it reads KAEDPGRKAAPDLGSHLDR. Over residues 750–768 the composition is skewed to low complexity; that stretch reads HPHTSSLGRRGPGPGSASA. Polar residues predominate over residues 814–823; the sequence is TVSTSSTSGN. Ser816 carries the post-translational modification Phosphoserine. Basic and acidic residues-rich tracts occupy residues 826-836 and 846-859; these read EETKAHIRFSE and QHFK…EEAS. 2 stretches are compositionally biased toward polar residues: residues 862-871 and 887-896; these read PCGQQLSGGA and RSQSTFQLSS. At Ser890 the chain carries Phosphoserine. Residues 897–909 are compositionally biased toward basic and acidic residues; it reads EPEREPEWRDRPG. A phosphoserine mark is found at Ser910 and Ser913. In terms of domain architecture, ASD1 spans 928-1030; the sequence is IKDAQSRVLG…SEPEKMNEVG (103 aa). Over residues 950–964 the composition is skewed to low complexity; the sequence is APVASRSWRPRPSSA. Phosphoserine is present on Ser970. The span at 1011–1027 shows a compositional bias: basic and acidic residues; sequence LTPEQKKRSYSEPEKMN. 2 positions are modified to phosphoserine: Ser1069 and Ser1072. Disordered regions lie at residues 1093-1115, 1137-1223, 1315-1573, and 1627-1665; these read KTGK…LRER, SSLS…MSAE, ECPG…SFNK, and SLGG…SSED. Over residues 1137 to 1148 the composition is skewed to low complexity; sequence SSLSSLREPSLQ. Ser1221 carries the post-translational modification Phosphoserine. Residues 1366 to 1375 are compositionally biased toward polar residues; the sequence is YCSQDGQTGR. Over residues 1403–1417 the composition is skewed to basic and acidic residues; the sequence is CEGDGPEHGVEEGTR. Ser1441 carries the post-translational modification Phosphoserine. Positions 1459 to 1472 are enriched in polar residues; the sequence is KQQSLPSLCSTSDP. Basic and acidic residues predominate over residues 1498–1515; the sequence is PPPHEDYEDEVFVRDPHP. Over residues 1524–1536 the composition is skewed to pro residues; that stretch reads EPLPPPPPPPPSQ. Residues 1634–1649 show a composition bias toward polar residues; it reads PIQTQSLSHDPVSGTQ. The segment covering 1651 to 1665 has biased composition (basic and acidic residues); sequence LEKKVSPDPQKSSED. The 289-residue stretch at 1669–1957 folds into the ASD2 domain; the sequence is EALAKEIVHQ…QVKCLLESLP (289 aa).

This sequence belongs to the shroom family. Interacts with F-actin. Interacts with ROCK1.

Its subcellular location is the cell junction. The protein localises to the adherens junction. The protein resides in the cytoplasm. It localises to the cytoskeleton. It is found in the apical cell membrane. Functionally, controls cell shape changes in the neuroepithelium during neural tube closure. Induces apical constriction in epithelial cells by promoting the apical accumulation of F-actin and myosin II, and probably by bundling stress fibers. Induces apicobasal cell elongation by redistributing gamma-tubulin and directing the assembly of robust apicobasal microtubule arrays. The polypeptide is Protein Shroom3 (SHROOM3) (Homo sapiens (Human)).